The following is a 289-amino-acid chain: MRILEKAPAKINLSLDVTSKRPDGYHEVEMIMTTIDLADRIELTELPENVIRVASHNRFVPDDQRNLAYQAAKLLKERFQVKKGVSIMITKVIPVAAGLAGGSSDAAATLRGLNRLWDLKLSVEELAELGAEIGSDVSFCVYGGTALATGRGEKIRHISAPPHCWVVLAKPTIGVSTAEVYRRLNLQQVRHPDVQAMIDAIEEKSFQKVCGQLGNVLESVTLSLHPEVAMIKNQMKRFGADAVLMSGSGPTVFGLVQYESKVQRIYNGLRGFCDQVYAVRMIGEQNALD.

The active site involves Lys-10. Position 94–104 (94–104 (PVAAGLAGGSS)) interacts with ATP. Residue Asp-136 is part of the active site.

It belongs to the GHMP kinase family. IspE subfamily.

It carries out the reaction 4-CDP-2-C-methyl-D-erythritol + ATP = 4-CDP-2-C-methyl-D-erythritol 2-phosphate + ADP + H(+). The protein operates within isoprenoid biosynthesis; isopentenyl diphosphate biosynthesis via DXP pathway; isopentenyl diphosphate from 1-deoxy-D-xylulose 5-phosphate: step 3/6. Its function is as follows. Catalyzes the phosphorylation of the position 2 hydroxy group of 4-diphosphocytidyl-2C-methyl-D-erythritol. The protein is 4-diphosphocytidyl-2-C-methyl-D-erythritol kinase of Bacillus velezensis (strain DSM 23117 / BGSC 10A6 / LMG 26770 / FZB42) (Bacillus amyloliquefaciens subsp. plantarum).